Here is a 282-residue protein sequence, read N- to C-terminus: Elongation factor Ts (282 aa).

The involved in Mg(2+) ion dislocation from EF-Tu stretch occupies residues 79–82 (TDFV).

The protein belongs to the EF-Ts family.

The protein localises to the cytoplasm. In terms of biological role, associates with the EF-Tu.GDP complex and induces the exchange of GDP to GTP. It remains bound to the aminoacyl-tRNA.EF-Tu.GTP complex up to the GTP hydrolysis stage on the ribosome. The polypeptide is Elongation factor Ts (Shewanella woodyi (strain ATCC 51908 / MS32)).